Here is a 219-residue protein sequence, read N- to C-terminus: uncharacterized protein (219 aa).

Positions 70–102 are disordered; the sequence is VHIGDNHPEPKNESKTQPKIESKKEPTLKQEEQ. Residues 73-101 show a composition bias toward basic and acidic residues; the sequence is GDNHPEPKNESKTQPKIESKKEPTLKQEE. Positions 96-120 form a coiled coil; that stretch reads TLKQEEQTIQAEEEAQKIAKEETRE. 3 helical membrane passes run 126 to 146, 153 to 173, and 192 to 212; these read GGEI…VNML, IFGL…VIVL, and TYGV…AIFF.

Its subcellular location is the membrane. This is an uncharacterized protein from Acanthamoeba polyphaga mimivirus (APMV).